The sequence spans 347 residues: Phenylalanine--tRNA ligase alpha subunit (347 aa).

Glutamate 261 contacts Mg(2+).

It belongs to the class-II aminoacyl-tRNA synthetase family. Phe-tRNA synthetase alpha subunit type 1 subfamily. Tetramer of two alpha and two beta subunits. Mg(2+) serves as cofactor.

The protein localises to the cytoplasm. It carries out the reaction tRNA(Phe) + L-phenylalanine + ATP = L-phenylalanyl-tRNA(Phe) + AMP + diphosphate + H(+). The sequence is that of Phenylalanine--tRNA ligase alpha subunit from Streptococcus thermophilus (strain ATCC BAA-491 / LMD-9).